A 391-amino-acid chain; its full sequence is NADH-quinone oxidoreductase subunit D (391 aa).

This sequence belongs to the complex I 49 kDa subunit family. In terms of assembly, NDH-1 is composed of 14 different subunits. Subunits NuoB, C, D, E, F, and G constitute the peripheral sector of the complex.

Its subcellular location is the cell inner membrane. It catalyses the reaction a quinone + NADH + 5 H(+)(in) = a quinol + NAD(+) + 4 H(+)(out). NDH-1 shuttles electrons from NADH, via FMN and iron-sulfur (Fe-S) centers, to quinones in the respiratory chain. The immediate electron acceptor for the enzyme in this species is believed to be ubiquinone. Couples the redox reaction to proton translocation (for every two electrons transferred, four hydrogen ions are translocated across the cytoplasmic membrane), and thus conserves the redox energy in a proton gradient. This is NADH-quinone oxidoreductase subunit D from Rickettsia felis (strain ATCC VR-1525 / URRWXCal2) (Rickettsia azadi).